Reading from the N-terminus, the 162-residue chain is Transcription elongation factor GreB (162 aa).

A coiled-coil region spans residues 52–73 (KKLLREIDRRVRYLRKRLEDVK).

It belongs to the GreA/GreB family. GreB subfamily.

Necessary for efficient RNA polymerase transcription elongation past template-encoded arresting sites. The arresting sites in DNA have the property of trapping a certain fraction of elongating RNA polymerases that pass through, resulting in locked ternary complexes. Cleavage of the nascent transcript by cleavage factors such as GreA or GreB allows the resumption of elongation from the new 3'terminus. GreB releases sequences of up to 9 nucleotides in length. This is Transcription elongation factor GreB from Pseudomonas putida (strain ATCC 47054 / DSM 6125 / CFBP 8728 / NCIMB 11950 / KT2440).